The sequence spans 129 residues: Glycine cleavage system H protein (129 aa).

Positions L24–K106 constitute a Lipoyl-binding domain. The residue at position 65 (K65) is an N6-lipoyllysine.

Belongs to the GcvH family. The glycine cleavage system is composed of four proteins: P, T, L and H. Requires (R)-lipoate as cofactor.

The glycine cleavage system catalyzes the degradation of glycine. The H protein shuttles the methylamine group of glycine from the P protein to the T protein. This is Glycine cleavage system H protein from Prochlorococcus marinus (strain MIT 9312).